Consider the following 180-residue polypeptide: MAELVSKRYASALFELAFEEQKHHKVQEELAFIRSCIEDEPSFFELLKSPLITADEKKDIISNIFRDRVCMEVLNFLYIIIDKGREAYIKDIVNEYILLVDSVQNKVDAVAITAVPMEKQDLLMLQANLSKSSGKNIQLQNQVDPTIIGGVLVKIGDKVIDGTIKNRLATMQEQLSKILV.

It belongs to the ATPase delta chain family. F-type ATPases have 2 components, F(1) - the catalytic core - and F(0) - the membrane proton channel. F(1) has five subunits: alpha(3), beta(3), gamma(1), delta(1), epsilon(1). F(0) has three main subunits: a(1), b(2) and c(10-14). The alpha and beta chains form an alternating ring which encloses part of the gamma chain. F(1) is attached to F(0) by a central stalk formed by the gamma and epsilon chains, while a peripheral stalk is formed by the delta and b chains.

It localises to the cell membrane. F(1)F(0) ATP synthase produces ATP from ADP in the presence of a proton or sodium gradient. F-type ATPases consist of two structural domains, F(1) containing the extramembraneous catalytic core and F(0) containing the membrane proton channel, linked together by a central stalk and a peripheral stalk. During catalysis, ATP synthesis in the catalytic domain of F(1) is coupled via a rotary mechanism of the central stalk subunits to proton translocation. Functionally, this protein is part of the stalk that links CF(0) to CF(1). It either transmits conformational changes from CF(0) to CF(1) or is implicated in proton conduction. This is ATP synthase subunit delta from Alkaliphilus oremlandii (strain OhILAs) (Clostridium oremlandii (strain OhILAs)).